A 568-amino-acid polypeptide reads, in one-letter code: Sulfite reductase [NADPH] hemoprotein beta-component (568 aa).

[4Fe-4S] cluster is bound by residues C426, C432, C471, and C475. Siroheme is bound at residue C475.

This sequence belongs to the nitrite and sulfite reductase 4Fe-4S domain family. As to quaternary structure, alpha(8)-beta(8). The alpha component is a flavoprotein, the beta component is a hemoprotein. Requires siroheme as cofactor. [4Fe-4S] cluster is required as a cofactor.

The catalysed reaction is hydrogen sulfide + 3 NADP(+) + 3 H2O = sulfite + 3 NADPH + 4 H(+). Its pathway is sulfur metabolism; hydrogen sulfide biosynthesis; hydrogen sulfide from sulfite (NADPH route): step 1/1. Its function is as follows. Component of the sulfite reductase complex that catalyzes the 6-electron reduction of sulfite to sulfide. This is one of several activities required for the biosynthesis of L-cysteine from sulfate. In Xylella fastidiosa (strain M23), this protein is Sulfite reductase [NADPH] hemoprotein beta-component.